We begin with the raw amino-acid sequence, 118 residues long: Aspartate 1-decarboxylase (118 aa).

Residue Ser25 is the Schiff-base intermediate with substrate; via pyruvic acid of the active site. Position 25 is a pyruvic acid (Ser) (Ser25). Thr57 provides a ligand contact to substrate. Tyr58 functions as the Proton donor in the catalytic mechanism. 73-75 is a binding site for substrate; it reads GAA.

The protein belongs to the PanD family. Heterooctamer of four alpha and four beta subunits. It depends on pyruvate as a cofactor. In terms of processing, is synthesized initially as an inactive proenzyme, which is activated by self-cleavage at a specific serine bond to produce a beta-subunit with a hydroxyl group at its C-terminus and an alpha-subunit with a pyruvoyl group at its N-terminus.

The protein localises to the cytoplasm. It catalyses the reaction L-aspartate + H(+) = beta-alanine + CO2. It participates in cofactor biosynthesis; (R)-pantothenate biosynthesis; beta-alanine from L-aspartate: step 1/1. Functionally, catalyzes the pyruvoyl-dependent decarboxylation of aspartate to produce beta-alanine. The protein is Aspartate 1-decarboxylase of Phenylobacterium zucineum (strain HLK1).